The primary structure comprises 462 residues: MSDPFYPHGHGGAAGGEGAAAAGYSSYEVDLIAARYGGRPLANPSSAAADLDARLAGARRSMGVLYHQPIMGSHSTVEQIEALYSSNTMTKRPRLESSLPIYPQRPGEKDCAFYMMTRTCKFGGSCKFDHPQWVPEGGIPNWKEQAANVEESYPEQEGEPDCPFFMKTGKCKFGSKCKFNHPKEKVNALASGNTNDKHLIADSSILPVRPSEPLCSFYAKTGKCKFRAMCKFNHPKDIEIPSSQNEPESAVTVEGETDIGSAADSVSAKMQTPVAAAQEFNSKGLPMRPGEVDCPFYMKMGSCKFGSTCRFNHPDRLVLNFPLPLGQTILPTPESMLLNSSANFMQGFDFHAAHMPVGPGPVTYPQRPGATVCDFYMKTGFCKFADRCKFHHPIDRSAPDPSANWEPAEESVQLTLAGLPRREDAVVCAFYMKTGVCKFGMQCKFDHPPPQEAIAKVSNSGS.

C3H1-type zinc fingers lie at residues 105–133 (RPGE…HPQW), 156–184 (QEGE…HPKE), 209–237 (RPSE…HPKD), 288–316 (RPGE…HPDR), 367–395 (RPGA…HPID), and 422–450 (REDA…HPPP).

This Oryza sativa subsp. japonica (Rice) protein is Zinc finger CCCH domain-containing protein 8.